A 440-amino-acid chain; its full sequence is Histidinol dehydrogenase homolog 2 (440 aa).

His-265 contributes to the Zn(2+) binding site. Catalysis depends on proton acceptor residues Glu-333 and His-334. Position 426 (His-426) interacts with Zn(2+).

The protein belongs to the histidinol dehydrogenase family. Zn(2+) is required as a cofactor.

The protein is Histidinol dehydrogenase homolog 2 of Mesorhizobium japonicum (strain LMG 29417 / CECT 9101 / MAFF 303099) (Mesorhizobium loti (strain MAFF 303099)).